We begin with the raw amino-acid sequence, 447 residues long: GTPase Der (447 aa).

2 consecutive EngA-type G domains span residues proline 3 to glutamate 167 and isoleucine 180 to threonine 353. Residues glycine 9–serine 16, aspartate 56–phenylalanine 60, asparagine 119–glutamate 122, glycine 186–serine 193, aspartate 233–leucine 237, and asparagine 298–aspartate 301 each bind GTP. The 86-residue stretch at threonine 353 to arginine 438 folds into the KH-like domain.

Belongs to the TRAFAC class TrmE-Era-EngA-EngB-Septin-like GTPase superfamily. EngA (Der) GTPase family. In terms of assembly, associates with the 50S ribosomal subunit.

Functionally, GTPase that plays an essential role in the late steps of ribosome biogenesis. In Paracidovorax citrulli (strain AAC00-1) (Acidovorax citrulli), this protein is GTPase Der.